Reading from the N-terminus, the 440-residue chain is Chromosome partition protein MukF (440 aa).

Residues 208 to 236 (LSETSGTLRELQDTLEAAGDKLQANLLRI) form a leucine-zipper region.

The protein belongs to the MukF family. In terms of assembly, interacts, and probably forms a ternary complex, with MukE and MukB via its C-terminal region. The complex formation is stimulated by calcium or magnesium. It is required for an interaction between MukE and MukB.

It is found in the cytoplasm. The protein resides in the nucleoid. Involved in chromosome condensation, segregation and cell cycle progression. May participate in facilitating chromosome segregation by condensation DNA from both sides of a centrally located replisome during cell division. Not required for mini-F plasmid partitioning. Probably acts via its interaction with MukB and MukE. Overexpression results in anucleate cells. It has a calcium binding activity. In Citrobacter koseri (strain ATCC BAA-895 / CDC 4225-83 / SGSC4696), this protein is Chromosome partition protein MukF.